A 275-amino-acid polypeptide reads, in one-letter code: MAIKTYRPLTPTLRFQTKLVNEELTTDRPHKPLTKTKQRTGGRRNAGDITIWHRGGGHKRKLRLIDFKRDKSGVPATVATVEYDPNRSANIALLHYADGEKRYILHPVGLKVGQKVVSGPDADILVGNALPLRNIPAGTVVHNIELKPGKGAQMARSAGAQAQLVAKESDYALLKLPSGETRRVLVDCMATIGQVGNLDYENVAIGKAGRTRWMGVRPTNRGVVMNPVDHPHGGGEGKTSGGRHPVTPWGQPTRGYKTRNNKRTDKFIVTRRGKR.

Disordered stretches follow at residues 24-48 (LTTD…NAGD) and 224-264 (VMNP…NKRT). A compositionally biased stretch (basic residues) spans 31-42 (KPLTKTKQRTGG).

It belongs to the universal ribosomal protein uL2 family. In terms of assembly, part of the 50S ribosomal subunit. Forms a bridge to the 30S subunit in the 70S ribosome.

Functionally, one of the primary rRNA binding proteins. Required for association of the 30S and 50S subunits to form the 70S ribosome, for tRNA binding and peptide bond formation. It has been suggested to have peptidyltransferase activity; this is somewhat controversial. Makes several contacts with the 16S rRNA in the 70S ribosome. The chain is Large ribosomal subunit protein uL2 from Koribacter versatilis (strain Ellin345).